Reading from the N-terminus, the 482-residue chain is Anaerobic nitric oxide reductase flavorubredoxin (482 aa).

The interval 30 to 210 is zinc metallo-hydrolase; the sequence is LRGSSYNSYL…PFSRLVTPKI (181 aa). Fe cation is bound by residues His-79, Glu-81, Asp-83, His-147, Asp-166, and His-227. A Flavodoxin-like domain is found at 254–393; sequence ITLFYDTMSN…ICRQHGREIA (140 aa). FMN-binding positions include 260–264 and 342–369; these read TMSNN and AFGSHGWSGGAVDRLSTRLQDAGFEMSM. The region spanning 426 to 477 is the Rubredoxin-like domain; it reads GPCMQCSVCQWVYDPALGEPLQDVAPGTPWSDVPDNFLCPECSLGKDVFDVL. Residues Cys-431, Cys-434, Cys-464, and Cys-467 each coordinate Fe cation.

This sequence in the N-terminal section; belongs to the zinc metallo-hydrolase group 3 family. Homotetramer. It depends on Fe cation as a cofactor. The cofactor is FMN.

The protein resides in the cytoplasm. The protein operates within nitrogen metabolism; nitric oxide reduction. Anaerobic nitric oxide reductase; uses NADH to detoxify nitric oxide (NO), protecting several 4Fe-4S NO-sensitive enzymes. Has at least 2 reductase partners, only one of which (NorW, flavorubredoxin reductase) has been identified. NO probably binds to the di-iron center; electrons enter from the NorW at rubredoxin and are transferred sequentially to the FMN center and the di-iron center. Also able to function as an aerobic oxygen reductase. This chain is Anaerobic nitric oxide reductase flavorubredoxin, found in Enterobacter sp. (strain 638).